Here is a 161-residue protein sequence, read N- to C-terminus: Nucleotide-binding protein Gbem_0619 (161 aa).

It belongs to the YajQ family.

Its function is as follows. Nucleotide-binding protein. The sequence is that of Nucleotide-binding protein Gbem_0619 from Citrifermentans bemidjiense (strain ATCC BAA-1014 / DSM 16622 / JCM 12645 / Bem) (Geobacter bemidjiensis).